Reading from the N-terminus, the 668-residue chain is Spindle assembly abnormal protein 6 homolog (668 aa).

A PISA domain is found at valine 39–leucine 91. Residues leucine 182–leucine 482 adopt a coiled-coil conformation. A disordered region spans residues glycine 623–serine 668.

Nine homodimers form a cartwheel structure with an internal diameter of 23 nM and radial spokes connecting to the microtubule triplets.

The protein localises to the cytoplasm. It localises to the cytoskeleton. The protein resides in the microtubule organizing center. Its subcellular location is the centrosome. Central scaffolding component of the centrioles ensuring their 9-fold symmetry. Required for centrosome biogenesis and duplication: required both for mother-centriole-dependent centriole duplication and deuterosome-dependent centriole amplification in multiciliated cells. The sequence is that of Spindle assembly abnormal protein 6 homolog (sas6) from Xenopus laevis (African clawed frog).